Here is a 564-residue protein sequence, read N- to C-terminus: Hexose transporter HXT17 (564 aa).

Basic and acidic residues predominate over residues 1 to 12; it reads MQSSTESDRDIQ. The interval 1–22 is disordered; that stretch reads MQSSTESDRDIQDGPDADIHVA. The Cytoplasmic segment spans residues 1 to 52; the sequence is MQSSTESDRDIQDGPDADIHVAPPVEKEWSDGFDDNEVINGDNVEPPKRGLI. A helical transmembrane segment spans residues 53 to 73; the sequence is GYLVIYLLCYPISFGGFLPGW. Topologically, residues 74–109 are extracellular; the sequence is DSGITAGFINMDNFKMNFGSYKHSTGEYYLSNVRMG. Residues 110–130 form a helical membrane-spanning segment; sequence LLVAMFSIGCAIGGLIFARLA. At 131-136 the chain is on the cytoplasmic side; that stretch reads DTLGRR. A helical transmembrane segment spans residues 137–157; sequence LAIVIVVLVYMVGAIIQISSN. Residues 158–167 are Extracellular-facing; the sequence is HKWYQYFVGK. The chain crosses the membrane as a helical span at residues 168–188; it reads IIYGLGAGGCSVLCPMLLSEI. At 189-194 the chain is on the cytoplasmic side; that stretch reads APTDLR. Residues 195–215 form a helical membrane-spanning segment; it reads GGLVSLYQLNMTFGIFLGYCS. At 216–229 the chain is on the extracellular side; that stretch reads VYGTRKYDNTAQWR. A helical membrane pass occupies residues 230 to 250; the sequence is VPLGLCFLWTLIIIIGMLLVP. Residues 251-333 are Cytoplasmic-facing; sequence ESPRYLIECE…VQTFLQLTGE (83 aa). A helical transmembrane segment spans residues 334–350; sequence NYFFFYGTTIFKSVGLT. The Extracellular segment spans residues 351 to 356; sequence DGFETS. Residues 357–374 form a helical membrane-spanning segment; the sequence is IVLGTVNFFSTIIAVMVV. Topologically, residues 375-381 are cytoplasmic; the sequence is DKIGRRK. A helical membrane pass occupies residues 382–402; that stretch reads CLLFGAAGMMACMVIFASIGV. Over 403–424 the chain is Extracellular; sequence KCLYPHGQDGPSSKGAGNAMIV. Residues 425–445 form a helical membrane-spanning segment; the sequence is FTCFYIFCFATTWAPVAYIVV. At 446 to 462 the chain is on the cytoplasmic side; that stretch reads AESFPSKVKSRAMSIST. The helical transmembrane segment at 463–483 threads the bilayer; that stretch reads ACNWLWQFLIGFFTPFITGSI. A topological domain (extracellular) is located at residue His-484. Residues 485–505 traverse the membrane as a helical segment; sequence FYYGYVFVGCLVAMFLYVFFF. The Cytoplasmic segment spans residues 506 to 564; sequence LPETIGLSLEEIQLLYEEGIKPWKSASWVPPSRRGIPSEESKTEKKDWKKFLKFSKGSD.

This sequence belongs to the major facilitator superfamily. Sugar transporter (TC 2.A.1.1) family.

It localises to the membrane. Its function is as follows. Probable glucose transporter. This is Hexose transporter HXT17 (HXT17) from Saccharomyces cerevisiae (strain ATCC 204508 / S288c) (Baker's yeast).